An 819-amino-acid polypeptide reads, in one-letter code: NEDD4-binding protein 1 (819 aa).

Polar residues predominate over residues 1-13 (MASGSVQSSSGNG). Residues 1-20 (MASGSVQSSSGNGRRQAAVV) are disordered. Positions 80–164 (KQAVRRAKEY…VQQFIALFKD (85 aa)) constitute a KH-like domain. Positions 226 to 241 (DDKAECKVNQKDEVSR) are enriched in basic and acidic residues. Disordered stretches follow at residues 226–247 (DDKAECKVNQKDEVSRKGAGTP) and 666–736 (KLDD…MAPR). The RNase NYN domain maps to 517-669 (LKHIIIDGSN…LGRYGPKLDD (153 aa)). Residues 673–689 (KQPNNRTVHSSFPSSNE) are compositionally biased toward polar residues. A coCUN region spans residues 772–819 (RSPSETMQLKEALLKIFPEADQRHKINEILTAHPFMRDLNALSAMVLD).

It belongs to the N4BP1 family.

It is found in the cytoplasm. Its subcellular location is the cytosol. The protein resides in the nucleus. The protein localises to the nucleolus. It localises to the PML body. Functionally, potent suppressor of cytokine production that acts as a regulator of innate immune signaling and inflammation. Acts as a key negative regulator of select cytokine and chemokine responses elicited by TRIF-independent Toll-like receptors (TLRs), thereby limiting inflammatory cytokine responses to minor insults. Has ribonuclease activity. This chain is NEDD4-binding protein 1, found in Xenopus tropicalis (Western clawed frog).